Consider the following 311-residue polypeptide: MASRAQRTGGRMILHNDLSGLRVVAVHAHPDDEAITTGGALHHLATRGADVTVVTCTLGEQGEVIGETWQQLVNGDADQLGGFRIHELLSSLRILGASGCFLGGAGRWRDSGMVGDPANDHPRSFVRSGDQAEEQLVEIFTMLRPHLVITYGPDGGYGHPDHIRAHEITHGAAGRVEGIQRILWAVTGRTDLQAGLDAISAVPTGWRAAGDDELACQDRVDFALELDDRAYHAKVESMRAHATQLWIADGGVSDTNPHAAFAEVTDRAAAPVVFALSNLIAQPVMRREHYQLGAGTAFPADAQGPADGLQW.

His29, Asp32, and His162 together coordinate Zn(2+).

It belongs to the MshB deacetylase family. Requires Zn(2+) as cofactor.

It carries out the reaction 1D-myo-inositol 2-acetamido-2-deoxy-alpha-D-glucopyranoside + H2O = 1D-myo-inositol 2-amino-2-deoxy-alpha-D-glucopyranoside + acetate. In terms of biological role, catalyzes the deacetylation of 1D-myo-inositol 2-acetamido-2-deoxy-alpha-D-glucopyranoside (GlcNAc-Ins) in the mycothiol biosynthesis pathway. The sequence is that of 1D-myo-inositol 2-acetamido-2-deoxy-alpha-D-glucopyranoside deacetylase from Corynebacterium efficiens (strain DSM 44549 / YS-314 / AJ 12310 / JCM 11189 / NBRC 100395).